Reading from the N-terminus, the 262-residue chain is Ribosome-recycling factor, mitochondrial (262 aa).

The transit peptide at 1–55 (MASGIRCFRLLHPAFRSYHAALTRPVSEVSMKTVSGRQHGHRQYSAYPAVPVRHF) directs the protein to the mitochondrion.

It belongs to the RRF family.

It localises to the mitochondrion. Its function is as follows. Responsible for the disassembly of ribosomes from messenger RNA at the termination of mitochondrial protein biosynthesis. Acts in collaboration with GFM2. Promotes mitochondrial ribosome recycling by dissolution of intersubunit contacts. This is Ribosome-recycling factor, mitochondrial (Mrrf) from Mus musculus (Mouse).